We begin with the raw amino-acid sequence, 415 residues long: ATP-dependent Clp protease ATP-binding subunit ClpX (415 aa).

A ClpX-type ZB domain is found at methionine 1 to leucine 53. Zn(2+) is bound by residues cysteine 12, cysteine 15, cysteine 34, and cysteine 37. Proline 118–leucine 125 serves as a coordination point for ATP.

Belongs to the ClpX chaperone family. In terms of assembly, component of the ClpX-ClpP complex. Forms a hexameric ring that, in the presence of ATP, binds to fourteen ClpP subunits assembled into a disk-like structure with a central cavity, resembling the structure of eukaryotic proteasomes.

Its function is as follows. ATP-dependent specificity component of the Clp protease. It directs the protease to specific substrates. Can perform chaperone functions in the absence of ClpP. In Treponema pallidum (strain Nichols), this protein is ATP-dependent Clp protease ATP-binding subunit ClpX.